The sequence spans 140 residues: MQRQRGFTLLEIMVVIVILGVLASLVVPNLMGNKEKADRQKVVSDLVALEGALDMYKLDNSRYPTTEQGLQALVSAPSAEPHARNYPEGGYIRRLPQDPWGSDYQLLSPGQHGQVDIFSLGPDGVPESNDDIGNWTIGKK.

Positions 1–6 are cleaved as a propeptide — leader sequence; that stretch reads MQRQRG. Phenylalanine 7 is modified (N-methylphenylalanine). Residues 7–27 form a helical membrane-spanning segment; it reads FTLLEIMVVIVILGVLASLVV. Residues 120 to 140 form a disordered region; it reads LGPDGVPESNDDIGNWTIGKK.

The protein belongs to the GSP G family. As to quaternary structure, type II secretion system is composed of four main components: the outer membrane complex, the inner membrane complex, the cytoplasmic secretion ATPase and the periplasm-spanning pseudopilus. Forms homomultimers. Post-translationally, cleaved by the prepilin peptidase. In terms of processing, methylated by prepilin peptidase at the amino group of the N-terminal phenylalanine once the leader sequence is cleaved.

Its subcellular location is the cell inner membrane. In terms of biological role, core component of the type II secretion system required for the energy-dependent secretion of extracellular factors such as proteases and toxins from the periplasm. Pseudopilin (pilin-like) protein that polymerizes to form the pseudopilus. Further polymerization triggers pseudopilus growth. This Klebsiella pneumoniae protein is Type II secretion system core protein G (pulG).